The primary structure comprises 841 residues: mRNA export factor ICP27 homolog (841 aa).

Disordered regions lie at residues 12 to 82 (PFAG…QYDK) and 115 to 163 (RAQG…TSPD). The span at 32–49 (YSQQQSQHYYYGHNQSSY) shows a compositional bias: low complexity. The segment covering 66-79 (MPPPLSSPSSPPPQ) has biased composition (pro residues). Low complexity predominate over residues 132–147 (SSLVSSNNSNNNTTLS). Positions 298, 411, 413, and 418 each coordinate Zn(2+). The CHC2-type zinc-finger motif lies at 298–418 (CLLDSPGGGG…PGHRCQNEIC (121 aa)). Disordered regions lie at residues 444 to 749 (HPNG…DDLH) and 774 to 811 (SVTP…TDQP). The span at 495-507 (VDSRGGGGDRRGD) shows a compositional bias: basic and acidic residues. Positions 514 to 526 (NHHRHHTRRARTR) are enriched in basic residues. Residues 553–563 (RRGEAQRESNG) show a composition bias toward basic and acidic residues. Composition is skewed to low complexity over residues 568–579 (KSPSTVSSTTVH) and 591–603 (SRKS…QPET). Residues 614-623 (MPPPPSPCSP) are compositionally biased toward pro residues. Residues 641-657 (RPHDPPSGEPADAEKEL) show a composition bias toward basic and acidic residues. The span at 688 to 699 (DSSSSSSDSSSS) shows a compositional bias: low complexity. The segment covering 708 to 731 (EDCRELDLQSKRLEEALEERCERD) has biased composition (basic and acidic residues). Acidic residues-rich tracts occupy residues 732–749 (FEAD…DDLH) and 793–809 (DAEE…DETD).

This sequence belongs to the HHV-1 ICP27 protein family.

It localises to the virion tegument. It is found in the virion. The protein resides in the host nucleus. The protein localises to the host cytoplasm. In terms of biological role, immediate early (EI) protein that plays many roles during productive infection including regulation of viral gene expression and nuclear export of intronless viral RNAs. The polypeptide is mRNA export factor ICP27 homolog (Mus musculus (Mouse)).